The following is a 103-amino-acid chain: MALTKADLSEHLFNVVGLNKREAKDLVELFFKEISLSLERGEPVKLSGFGNFNLRDKGERPGRNPKTGEEIPITARRVVTFRAGHKLKSRVEKNVKPKEEGES.

A disordered region spans residues 50–72 (GNFNLRDKGERPGRNPKTGEEIP). Residues 54–69 (LRDKGERPGRNPKTGE) show a composition bias toward basic and acidic residues.

Belongs to the bacterial histone-like protein family. In terms of assembly, heterodimer of an alpha and a beta chain.

Its function is as follows. This protein is one of the two subunits of integration host factor, a specific DNA-binding protein that functions in genetic recombination as well as in transcriptional and translational control. The protein is Integration host factor subunit alpha of Coxiella burnetii (strain CbuK_Q154) (Coxiella burnetii (strain Q154)).